A 371-amino-acid chain; its full sequence is Peptide chain release factor 2 (371 aa).

Gln-253 bears the N5-methylglutamine mark.

This sequence belongs to the prokaryotic/mitochondrial release factor family. Post-translationally, methylated by PrmC. Methylation increases the termination efficiency of RF2.

It localises to the cytoplasm. Functionally, peptide chain release factor 2 directs the termination of translation in response to the peptide chain termination codons UGA and UAA. The sequence is that of Peptide chain release factor 2 from Mycobacterium sp. (strain JLS).